The chain runs to 210 residues: Probable GTP-binding protein EngB (210 aa).

In terms of domain architecture, EngB-type G spans 30 to 204 (QGYEVAFAGR…YRVLADWMEL (175 aa)). GTP is bound by residues 38-45 (GRSNAGKS), 64-68 (GRTQL), 82-85 (DLPG), 149-152 (TKAD), and 182-185 (LFSA). Positions 45 and 66 each coordinate Mg(2+).

It belongs to the TRAFAC class TrmE-Era-EngA-EngB-Septin-like GTPase superfamily. EngB GTPase family. It depends on Mg(2+) as a cofactor.

Its function is as follows. Necessary for normal cell division and for the maintenance of normal septation. This chain is Probable GTP-binding protein EngB, found in Pseudomonas entomophila (strain L48).